A 340-amino-acid chain; its full sequence is Tetraacyldisaccharide 4'-kinase (340 aa).

Residue 51 to 58 (HMGGAGKT) participates in ATP binding.

It belongs to the LpxK family.

The catalysed reaction is a lipid A disaccharide + ATP = a lipid IVA + ADP + H(+). It participates in glycolipid biosynthesis; lipid IV(A) biosynthesis; lipid IV(A) from (3R)-3-hydroxytetradecanoyl-[acyl-carrier-protein] and UDP-N-acetyl-alpha-D-glucosamine: step 6/6. Its function is as follows. Transfers the gamma-phosphate of ATP to the 4'-position of a tetraacyldisaccharide 1-phosphate intermediate (termed DS-1-P) to form tetraacyldisaccharide 1,4'-bis-phosphate (lipid IVA). The protein is Tetraacyldisaccharide 4'-kinase of Rhodopseudomonas palustris (strain ATCC BAA-98 / CGA009).